A 237-amino-acid polypeptide reads, in one-letter code: Chloride intracellular channel protein 3 (237 aa).

Residues Met-1–Pro-89 form a required for insertion into the membrane region. In terms of domain architecture, GST N-terminal spans Ala-13–Asp-91. Positions Cys-23–Cys-26 match the G-site motif. The cysteines at positions 23 and 26 are disulfide-linked. The helical transmembrane segment at Ser-25 to Val-45 threads the bilayer. Positions Asp-69 to Pro-236 constitute a GST C-terminal domain. At Ser-160 the chain carries Phosphoserine.

Belongs to the chloride channel CLIC family. Associated with the C-terminal of MAPK15.

It is found in the nucleus. The protein localises to the membrane. The protein resides in the cell membrane. It localises to the cytoplasm. Its subcellular location is the secreted. It is found in the extracellular space. The protein localises to the extracellular matrix. It catalyses the reaction chloride(in) = chloride(out). Its function is as follows. In the soluble state, catalyzes glutaredoxin-like thiol disulfide exchange reactions with reduced glutathione as electron donor. Reduced in a glutathione-dependent way and secreted into the extracellular matrix where it activates TGM2 and promotes blood vessel growth during tissue remodeling as occurs in tumorigenesis. Can reduce specific cysteines in TGM2 and regulate cofactor binding. Can insert into membranes and form outwardly rectifying chloride ion channels. May participate in cellular growth control. In Mus musculus (Mouse), this protein is Chloride intracellular channel protein 3.